A 228-amino-acid polypeptide reads, in one-letter code: uncharacterized protein (228 aa).

The protein belongs to the HAD-like hydrolase superfamily.

The protein localises to the cytoplasm. It is found in the nucleus. This is an uncharacterized protein from Schizosaccharomyces pombe (strain 972 / ATCC 24843) (Fission yeast).